We begin with the raw amino-acid sequence, 792 residues long: RNA-binding protein RRM4 (792 aa).

The tract at residues 37–60 (TDSTAQASHAAEQTIDAHQQAGDV) is disordered. RRM domains follow at residues 72–145 (PLLY…QDAS), 154–235 (KPRL…IDTA), and 321–398 (CNLF…LHEP). Residues 412–424 (AANADNSDMSSNS) are compositionally biased toward low complexity. 2 disordered regions span residues 412-438 (AANA…RQSR) and 630-649 (DESG…APVP). Polar residues predominate over residues 640 to 649 (RASSGSAPVP). The region spanning 715-792 (ATDDFIDSLQ…QHKVAAGLNK (78 aa)) is the PABC domain.

Belongs to the polyadenylate-binding protein type-1 family. In terms of assembly, part of large ribonucleoprotein complexes (mRNPs) containing RNA-binding proteins RRM4 and PAB1, endosome-binding protein UPA1, core scaffold protein UPA2 and associated factor GRP1. Interacts (via PABC domain) with UPA1 (via PAM2 domain).

It is found in the cytoplasm. The protein localises to the cytoskeleton. The protein resides in the endosome. Its function is as follows. Key RNA-binding protein involved in the formation of polar-growing hyphae which is essential for infection by the plant pathogen. During filamentation, assembles into particles that shuttle bidirectionally along microtubules to both poles. The RRM4 transport particles are part of the endosomal mRNP transport that regulates polarity of the infectious hyphae by transporting distinct mRNAs encoding, for example, the ubiquitin fusion protein UBI1, the small G protein RHO3, or the septin CDC3, from the nucleus to cell poles. Recognizes a broad spectrum of cargo mRNAs and precisely binds at stop codons, which constitute landmark sites of translation, suggesting an intimate connection of mRNA transport and translation. Also binds to the specific binding motif UAUG of cargo mRNAs via its third RRM. Plus-end-directed KIN3, a kinesin-3 type motor, mediates anterograde transport of RRM4-containing mRNPs whereas split dynein DYM1-DYN2 functions in retrograde movement of mRNPs. The chain is RNA-binding protein RRM4 from Mycosarcoma maydis (Corn smut fungus).